A 236-amino-acid polypeptide reads, in one-letter code: Glucosamine-6-phosphate deaminase (236 aa).

Residue D62 is the Proton acceptor; for enolization step of the active site. The For ring-opening step role is filled by N128. H130 acts as the Proton acceptor; for ring-opening step in catalysis. The active-site For ring-opening step is the E135.

The protein belongs to the glucosamine/galactosamine-6-phosphate isomerase family. NagB subfamily.

The enzyme catalyses alpha-D-glucosamine 6-phosphate + H2O = beta-D-fructose 6-phosphate + NH4(+). It functions in the pathway amino-sugar metabolism; N-acetylneuraminate degradation; D-fructose 6-phosphate from N-acetylneuraminate: step 5/5. Its function is as follows. Catalyzes the reversible isomerization-deamination of glucosamine 6-phosphate (GlcN6P) to form fructose 6-phosphate (Fru6P) and ammonium ion. This Pediococcus pentosaceus (strain ATCC 25745 / CCUG 21536 / LMG 10740 / 183-1w) protein is Glucosamine-6-phosphate deaminase.